Consider the following 426-residue polypeptide: Deoxyguanosinetriphosphate triphosphohydrolase-like protein (426 aa).

The segment at 1 to 23 (MYPYSESDAQRLHQEAPKASQLA) is disordered. Positions 67–217 (RLTHSLEVAQ…MDFSDDIAYS (151 aa)) constitute an HD domain.

It belongs to the dGTPase family. Type 2 subfamily.

This chain is Deoxyguanosinetriphosphate triphosphohydrolase-like protein, found in Corynebacterium efficiens (strain DSM 44549 / YS-314 / AJ 12310 / JCM 11189 / NBRC 100395).